The sequence spans 459 residues: Cysteine--tRNA ligase (459 aa).

Zn(2+) is bound at residue cysteine 28. Positions 30-40 match the 'HIGH' region motif; that stretch reads VTIYDLCHIGH. Zn(2+) contacts are provided by cysteine 209, histidine 234, and glutamate 238. The short motif at 266–270 is the 'KMSKS' region element; sequence KMSKS. Position 269 (lysine 269) interacts with ATP.

The protein belongs to the class-I aminoacyl-tRNA synthetase family. Monomer. The cofactor is Zn(2+).

It is found in the cytoplasm. It catalyses the reaction tRNA(Cys) + L-cysteine + ATP = L-cysteinyl-tRNA(Cys) + AMP + diphosphate. This Shewanella pealeana (strain ATCC 700345 / ANG-SQ1) protein is Cysteine--tRNA ligase.